We begin with the raw amino-acid sequence, 379 residues long: Tryptophan 2,3-dioxygenase (379 aa).

Substrate-binding positions include 57–61 and Arg-128; that span reads FIITH. His-312 lines the heme pocket. Residue Thr-327 coordinates substrate.

It belongs to the tryptophan 2,3-dioxygenase family. As to quaternary structure, homotetramer. Dimer of dimers. It depends on heme as a cofactor.

It carries out the reaction L-tryptophan + O2 = N-formyl-L-kynurenine. It participates in amino-acid degradation; L-tryptophan degradation via kynurenine pathway; L-kynurenine from L-tryptophan: step 1/2. The protein operates within pigment biosynthesis; ommochrome biosynthesis. Heme-dependent dioxygenase that catalyzes the oxidative cleavage of the L-tryptophan (L-Trp) pyrrole ring and converts L-tryptophan to N-formyl-L-kynurenine. Catalyzes the oxidative cleavage of the indole moiety. In Drosophila yakuba (Fruit fly), this protein is Tryptophan 2,3-dioxygenase.